We begin with the raw amino-acid sequence, 356 residues long: UDP-3-O-acylglucosamine N-acyltransferase (356 aa).

Residue His242 is the Proton acceptor of the active site.

The protein belongs to the transferase hexapeptide repeat family. LpxD subfamily. As to quaternary structure, homotrimer.

The catalysed reaction is a UDP-3-O-[(3R)-3-hydroxyacyl]-alpha-D-glucosamine + a (3R)-hydroxyacyl-[ACP] = a UDP-2-N,3-O-bis[(3R)-3-hydroxyacyl]-alpha-D-glucosamine + holo-[ACP] + H(+). The protein operates within bacterial outer membrane biogenesis; LPS lipid A biosynthesis. Functionally, catalyzes the N-acylation of UDP-3-O-acylglucosamine using 3-hydroxyacyl-ACP as the acyl donor. Is involved in the biosynthesis of lipid A, a phosphorylated glycolipid that anchors the lipopolysaccharide to the outer membrane of the cell. The polypeptide is UDP-3-O-acylglucosamine N-acyltransferase (Acinetobacter baylyi (strain ATCC 33305 / BD413 / ADP1)).